We begin with the raw amino-acid sequence, 1212 residues long: Probable serine/threonine-protein kinase DDB_G0284491 (1212 aa).

The helical transmembrane segment at 197–217 (LFHSFSLLNLYVYLIIVIRII) threads the bilayer. N229, N299, N309, N328, N335, N341, N344, N391, N419, N422, N426, N427, N435, and N499 each carry an N-linked (GlcNAc...) asparagine glycan. The interval 288 to 329 (LNNNNDNNLNNNNSNNNLNNNNNSNSNFNNDNNLNSNINSND) is disordered. 2 disordered regions span residues 412–439 (GNSN…NSGG) and 489–517 (IIKN…DYEE). Over residues 489–507 (IIKNNNNNNNNNSNNNNNN) the composition is skewed to low complexity. Positions 508–517 (NDEDDSDYEE) are enriched in acidic residues. Residues 673-693 (IQIFDDYSLIIALRLLMNFIL) traverse the membrane as a helical segment. Residues 703 to 720 (VPPPPTQPSSRPQSPPTV) are compositionally biased toward pro residues. Disordered regions lie at residues 703–733 (VPPP…HHSG) and 751–813 (EVVS…NNNN). A Protein kinase domain is found at 865–1182 (ETEIEPFASG…EVYNDLQDIY (318 aa)). ATP contacts are provided by residues 871–879 (FASGGQANI) and K924. D1035 functions as the Proton acceptor in the catalytic mechanism.

The protein belongs to the protein kinase superfamily. Ser/Thr protein kinase family.

The protein localises to the membrane. The enzyme catalyses L-seryl-[protein] + ATP = O-phospho-L-seryl-[protein] + ADP + H(+). The catalysed reaction is L-threonyl-[protein] + ATP = O-phospho-L-threonyl-[protein] + ADP + H(+). The polypeptide is Probable serine/threonine-protein kinase DDB_G0284491 (Dictyostelium discoideum (Social amoeba)).